The sequence spans 284 residues: Tropomyosin-1 (284 aa).

The stretch at 1–284 forms a coiled coil; the sequence is MDAIKKKMLA…DSTFAELAGY (284 aa). Residues 103–131 are disordered; that stretch reads EERLQSATEKLEEASKAADESERGRKVLE.

This sequence belongs to the tropomyosin family. Homodimer.

Functionally, tropomyosin, in association with the troponin complex, plays a central role in the calcium dependent regulation of muscle contraction. This is Tropomyosin-1 from Biomphalaria glabrata (Bloodfluke planorb).